The following is a 440-amino-acid chain: Polyprenol-phosphate-mannose-dependent alpha-(1-2)-phosphatidylinositol mannoside mannosyltransferase (440 aa).

11 helical membrane passes run 15–35 (LAPTIAWRVFQLLTLAGVLWV), 87–107 (LAAIAFAPFAWLSLPLASSAI), 109–129 (ATTLVLLIVATTIVLTRLDVW), 144–161 (AWLAAAMVAPAVIYLEPI), 164–184 (NFEFGQINVVLMTLVIADCVP), 193–213 (LLLGLAIALKLTPAVFLLYFL), 224–244 (TAATAVVASLAGFALAWSDSV), 281–301 (PRFILWVLACFAVLALTVWAA), 316–336 (APVLALVCVALFGLVVSPVSW), 360–380 (VWFTALTAAGLALTVWTPITL), and 395–415 (LAGGSYVWWAFAVIVVIGLVS). Residues 419–440 (THTGDAHETDEPLVPLARGEAG) form a disordered region.

This sequence belongs to the glycosyltransferase 87 family.

It localises to the cell membrane. It functions in the pathway phospholipid metabolism; phosphatidylinositol metabolism. Its function is as follows. Responsible for the addition of alpha-(1-2) mannose branches to the linear mannan core on the biosynthetic pathway to mature Lipoarabinomannan (LAM). The sequence is that of Polyprenol-phosphate-mannose-dependent alpha-(1-2)-phosphatidylinositol mannoside mannosyltransferase from Mycolicibacterium smegmatis (strain ATCC 700084 / mc(2)155) (Mycobacterium smegmatis).